A 170-amino-acid chain; its full sequence is MMAGMKIQLVCMILLAFSSWSLCSDSEEEMKALETDLLTNMHTSKISKASVPSWKMSLLNVCSLINNLNSQAEETGEFHEEELITRRKFPAALDGFSLEAMLTIYQLQKICHSRAFQHWELIQEDILDAGNDKNEKEEVIKRKIPYILKRQLYENKPRRPYILKRGSYYY.

The N-terminal stretch at 1–23 (MMAGMKIQLVCMILLAFSSWSLC) is a signal peptide.

It belongs to the neurotensin family. In terms of assembly, interacts with NTSR1. Interacts with SORT1. Interacts with SORL1. Neurotensin is cleaved and degraded by Angiotensin-converting enzyme (ACE) and neprilysin (MME). As to expression, brain and gut.

It is found in the secreted. Its subcellular location is the cytoplasmic vesicle. It localises to the secretory vesicle. Neurotensin may play an endocrine or paracrine role in the regulation of fat metabolism. It causes contraction of smooth muscle. The polypeptide is Neurotensin/neuromedin N (NTS) (Bos taurus (Bovine)).